Reading from the N-terminus, the 288-residue chain is Lipoyl synthase (288 aa).

The [4Fe-4S] cluster site is built by Cys-42, Cys-47, Cys-53, Cys-68, Cys-72, Cys-75, and Ser-280. The 216-residue stretch at 54–269 (WGEGTATFMI…EKYGIELGFR (216 aa)) folds into the Radical SAM core domain.

Belongs to the radical SAM superfamily. Lipoyl synthase family. [4Fe-4S] cluster is required as a cofactor.

It localises to the cytoplasm. It carries out the reaction [[Fe-S] cluster scaffold protein carrying a second [4Fe-4S](2+) cluster] + N(6)-octanoyl-L-lysyl-[protein] + 2 oxidized [2Fe-2S]-[ferredoxin] + 2 S-adenosyl-L-methionine + 4 H(+) = [[Fe-S] cluster scaffold protein] + N(6)-[(R)-dihydrolipoyl]-L-lysyl-[protein] + 4 Fe(3+) + 2 hydrogen sulfide + 2 5'-deoxyadenosine + 2 L-methionine + 2 reduced [2Fe-2S]-[ferredoxin]. Its pathway is protein modification; protein lipoylation via endogenous pathway; protein N(6)-(lipoyl)lysine from octanoyl-[acyl-carrier-protein]: step 2/2. Catalyzes the radical-mediated insertion of two sulfur atoms into the C-6 and C-8 positions of the octanoyl moiety bound to the lipoyl domains of lipoate-dependent enzymes, thereby converting the octanoylated domains into lipoylated derivatives. The polypeptide is Lipoyl synthase (Flavobacterium johnsoniae (strain ATCC 17061 / DSM 2064 / JCM 8514 / BCRC 14874 / CCUG 350202 / NBRC 14942 / NCIMB 11054 / UW101) (Cytophaga johnsonae)).